Here is a 421-residue protein sequence, read N- to C-terminus: NADP(+)-dependent glutamate dehydrogenase (421 aa).

Residues Lys70 and Lys94 each contribute to the substrate site. Lys106 (proton donor) is an active-site residue. Residues Thr190 and Asn221 each contribute to the NADP(+) site. Residue Ser354 coordinates substrate.

The protein belongs to the Glu/Leu/Phe/Val dehydrogenases family. In terms of assembly, homohexamer.

The enzyme catalyses L-glutamate + NADP(+) + H2O = 2-oxoglutarate + NH4(+) + NADPH + H(+). Is not regulated allosterically. Activity is inhibited in the presence of high ionic strength; the inhibitory effect of KCl is slightly higher than that of NaCl. Catalyzes the reversible oxidative deamination of L-glutamate to 2-oxoglutarate and ammonia, thereby playing a key role at the intersection of the carbon and nitrogen metabolic pathways. Shows a high preference for NADP(+)/NADPH as the acceptor/donor over NAD(+)/NADH. May function in vivo in the synthetic direction. Also catalyzes at very low rates the oxidative deamination of L-2-aminobutyrate, and the reductive amination of 2-oxovalerate and 2-oxobutyrate. This Pyrobaculum calidifontis (strain DSM 21063 / JCM 11548 / VA1) protein is NADP(+)-dependent glutamate dehydrogenase.